A 435-amino-acid chain; its full sequence is uncharacterized protein (435 aa).

Helical transmembrane passes span 40-60 (LVSTWLVVWGIWHVYFVEAVF), 103-123 (VLWTSITVWLIALAVVVWLIL), 133-153 (IMLALLVPVLPFAFSYAIYNP), 195-215 (LIHEAIPLEFALGAVLAIIVL), 226-246 (ICTALAIGPGTVSVLLLAVVG), 313-333 (VAVVGFRALFGAFLLGLLFFV), 358-378 (LALPVLASALLVPLFITAVDW), 381-401 (WWVMITLDVAIVYILYAIDRP), and 414-434 (VFVCVVLVLAVIPTGSANNIG).

It localises to the cell membrane. This is an uncharacterized protein from Mycobacterium bovis (strain ATCC BAA-935 / AF2122/97).